The primary structure comprises 338 residues: Anthranilate phosphoribosyltransferase (338 aa).

5-phospho-alpha-D-ribose 1-diphosphate is bound by residues Gly-81, 84–85 (GD), Ser-89, 91–94 (NVST), 109–117 (KHGNRALSS), and Ala-121. Anthranilate is bound at residue Gly-81. Mg(2+) is bound at residue Ser-93. Asn-112 is a binding site for anthranilate. Position 167 (Arg-167) interacts with anthranilate. The Mg(2+) site is built by Asp-226 and Glu-227.

The protein belongs to the anthranilate phosphoribosyltransferase family. Homodimer. Mg(2+) is required as a cofactor.

It catalyses the reaction N-(5-phospho-beta-D-ribosyl)anthranilate + diphosphate = 5-phospho-alpha-D-ribose 1-diphosphate + anthranilate. It participates in amino-acid biosynthesis; L-tryptophan biosynthesis; L-tryptophan from chorismate: step 2/5. Functionally, catalyzes the transfer of the phosphoribosyl group of 5-phosphorylribose-1-pyrophosphate (PRPP) to anthranilate to yield N-(5'-phosphoribosyl)-anthranilate (PRA). This chain is Anthranilate phosphoribosyltransferase, found in Rhodopseudomonas palustris (strain ATCC BAA-98 / CGA009).